The following is a 612-amino-acid chain: Dihydroxy-acid dehydratase (612 aa).

Asp81 provides a ligand contact to Mg(2+). [2Fe-2S] cluster is bound at residue Cys122. 2 residues coordinate Mg(2+): Asp123 and Lys124. At Lys124 the chain carries N6-carboxylysine. Cys193 is a binding site for [2Fe-2S] cluster. A Mg(2+)-binding site is contributed by Glu489. Ser515 functions as the Proton acceptor in the catalytic mechanism.

It belongs to the IlvD/Edd family. As to quaternary structure, homodimer. Requires [2Fe-2S] cluster as cofactor. Mg(2+) is required as a cofactor.

The catalysed reaction is (2R)-2,3-dihydroxy-3-methylbutanoate = 3-methyl-2-oxobutanoate + H2O. The enzyme catalyses (2R,3R)-2,3-dihydroxy-3-methylpentanoate = (S)-3-methyl-2-oxopentanoate + H2O. The protein operates within amino-acid biosynthesis; L-isoleucine biosynthesis; L-isoleucine from 2-oxobutanoate: step 3/4. Its pathway is amino-acid biosynthesis; L-valine biosynthesis; L-valine from pyruvate: step 3/4. Functionally, functions in the biosynthesis of branched-chain amino acids. Catalyzes the dehydration of (2R,3R)-2,3-dihydroxy-3-methylpentanoate (2,3-dihydroxy-3-methylvalerate) into 2-oxo-3-methylpentanoate (2-oxo-3-methylvalerate) and of (2R)-2,3-dihydroxy-3-methylbutanoate (2,3-dihydroxyisovalerate) into 2-oxo-3-methylbutanoate (2-oxoisovalerate), the penultimate precursor to L-isoleucine and L-valine, respectively. The sequence is that of Dihydroxy-acid dehydratase from Ectopseudomonas mendocina (strain ymp) (Pseudomonas mendocina).